Here is a 270-residue protein sequence, read N- to C-terminus: Orotidine 5'-phosphate decarboxylase (270 aa).

Substrate-binding positions include Asp-39, 61-63 (KTH), 93-102 (DRKFADIGNT), Tyr-221, and Arg-239. The active-site Proton donor is the Lys-95.

It belongs to the OMP decarboxylase family.

The catalysed reaction is orotidine 5'-phosphate + H(+) = UMP + CO2. The protein operates within pyrimidine metabolism; UMP biosynthesis via de novo pathway; UMP from orotate: step 2/2. The chain is Orotidine 5'-phosphate decarboxylase (URA3) from Candida dubliniensis (strain CD36 / ATCC MYA-646 / CBS 7987 / NCPF 3949 / NRRL Y-17841) (Yeast).